The chain runs to 179 residues: Fimbrial subunit ElfA (179 aa).

An N-terminal signal peptide occupies residues 1–21 (MKKSVLTAFITVVCATSSVMA).

The protein belongs to the fimbrial protein family.

The protein localises to the fimbrium. Its function is as follows. Part of the elfADCG-ycbUVF fimbrial operon, which promotes adhesion of bacteria to different abiotic surfaces. ElfA is the major fimbrial subunit produced by this operon. The protein is Fimbrial subunit ElfA (elfA) of Escherichia coli (strain K12).